A 1366-amino-acid chain; its full sequence is DNA-directed RNA polymerase subunit beta (1366 aa).

The protein belongs to the RNA polymerase beta chain family. The RNAP catalytic core consists of 2 alpha, 1 beta, 1 beta' and 1 omega subunit. When a sigma factor is associated with the core the holoenzyme is formed, which can initiate transcription.

The enzyme catalyses RNA(n) + a ribonucleoside 5'-triphosphate = RNA(n+1) + diphosphate. DNA-dependent RNA polymerase catalyzes the transcription of DNA into RNA using the four ribonucleoside triphosphates as substrates. The polypeptide is DNA-directed RNA polymerase subunit beta (Polynucleobacter asymbioticus (strain DSM 18221 / CIP 109841 / QLW-P1DMWA-1) (Polynucleobacter necessarius subsp. asymbioticus)).